A 349-amino-acid chain; its full sequence is MDTIAARALTVMRACATLQEARIVLEANVMEILGIAINRYNGLTLRGVTMRPTSLAQRNEMFFMCLDMMLSAAGINVGPISPDYTQHMATIGVLATPEIPFTTEAANEIARVTGETSTWGPARQPYGFFLETEETFQPGRWFMRAAQAVTAVVCGPDMIQVSLNAGARGDVQQIFQGRNDPMMIYLVWRRIENFAMAQGNSQQTQAGVTVSVGGVDMRAGRIIAWDGQAALHVHNPTQQNAMVQIQVVFYISMDKTLNQYPALTAEIFNVYSFRDHTWHGLRTAILNRTTLPNMLPPIFPPNDRDSILTLLLLSTLADVYTVLRPEFAIHGVNPMPGPLTRAIARAAYV.

Residue N287 is glycosylated (N-linked (GlcNAc...) asparagine; by host).

This sequence belongs to the orbivirus VP7 family. In terms of assembly, homotrimer that assemble in a complex of 260 capsomers on an inner scaffold composed of VP3.

It localises to the virion. The VP7 protein is one of the five proteins (with VP1, VP3, VP4, and VP6) which form the inner capsid of the virus. This is Core protein VP7 (Segment-7) from Antilocapra americana (Pronghorn).